We begin with the raw amino-acid sequence, 270 residues long: MKVTIAHNNYDKTLETVAYLKKLLQKKNVIFDAKYPDIVITVGGDGTLINAFHRYENQVDSVRFIGVHTGHLGFYTDWRNYDIDKMVDALLLTKGQPAKYPLLEIKMLTESGDTRYHLAVNESAVKRISHTLEADVYIDDELFENFRGDGLCVSTPTGSTAYSKSLGGAVIHPRLKALQMTEIASINNRVFRTLSAPIVIAPDQWITIVPNVDHFVMTVDGARIDVRNAKKIEYRISKHSIQFDQFGHHHFWSRVQNAFIKDTEDNDKFI.

Catalysis depends on Asp-45, which acts as the Proton acceptor. Residues 45–46 (DG), 121–122 (NE), Arg-147, Asp-149, 160–165 (TAYSKS), and Ala-184 contribute to the NAD(+) site.

This sequence belongs to the NAD kinase family. The cofactor is a divalent metal cation.

The protein resides in the cytoplasm. It carries out the reaction NAD(+) + ATP = ADP + NADP(+) + H(+). Involved in the regulation of the intracellular balance of NAD and NADP, and is a key enzyme in the biosynthesis of NADP. Catalyzes specifically the phosphorylation on 2'-hydroxyl of the adenosine moiety of NAD to yield NADP. In Lactobacillus helveticus (strain DPC 4571), this protein is NAD kinase.